A 245-amino-acid chain; its full sequence is LOB domain-containing protein 16 (245 aa).

The LOB domain occupies 14-116 (SPCGACKFLR…SQVMQMKAQI (103 aa)). The segment at 162 to 183 (YYGHVNPNNPVSPQSSLEESFS) is disordered.

This sequence belongs to the LOB domain-containing protein family. In terms of assembly, homodimer and heterodimer with LBD18. In terms of tissue distribution, expressed in roots and faintly in shoots.

It localises to the nucleus. Transcriptional activator. Involved in lateral root formation. Regulated by the transcriptional activators ARF7 and ARF19. Functions in the initiation and emergence of lateral roots, in conjunction with LBD18, downstream of ARF7 and ARF19. Acts downstream of the auxin influx carriers AUX1 and LAX1 in the regulation of lateral root initiation and development. In Arabidopsis thaliana (Mouse-ear cress), this protein is LOB domain-containing protein 16 (LBD16).